We begin with the raw amino-acid sequence, 389 residues long: 8-amino-7-oxononanoate synthase (389 aa).

Arg19 is a binding site for substrate. 106–107 (GY) provides a ligand contact to pyridoxal 5'-phosphate. His131 serves as a coordination point for substrate. Pyridoxal 5'-phosphate is bound by residues Ser178, 203–206 (DDAH), and 234–237 (TLSK). Residue Lys237 is modified to N6-(pyridoxal phosphate)lysine. Substrate is bound at residue Thr351.

This sequence belongs to the class-II pyridoxal-phosphate-dependent aminotransferase family. BioF subfamily. As to quaternary structure, homodimer. Pyridoxal 5'-phosphate is required as a cofactor.

The enzyme catalyses 6-carboxyhexanoyl-[ACP] + L-alanine + H(+) = (8S)-8-amino-7-oxononanoate + holo-[ACP] + CO2. It participates in cofactor biosynthesis; biotin biosynthesis. Its function is as follows. Catalyzes the decarboxylative condensation of pimeloyl-[acyl-carrier protein] and L-alanine to produce 8-amino-7-oxononanoate (AON), [acyl-carrier protein], and carbon dioxide. Can also use pimeloyl-CoA instead of pimeloyl-ACP as substrate. This is 8-amino-7-oxononanoate synthase (bioF) from Lysinibacillus sphaericus (Bacillus sphaericus).